Here is an 85-residue protein sequence, read N- to C-terminus: MAHKKAGGSTRNGRDSESKRLGVKRFGGEAVLAGSIIVRQRGTKFHAGIDVGCGKDHTLFALKDGKVKFEVKGPKNRKFISIEAE.

A disordered region spans residues 1–20 (MAHKKAGGSTRNGRDSESKR).

This sequence belongs to the bacterial ribosomal protein bL27 family.

The protein is Large ribosomal subunit protein bL27 of Yersinia enterocolitica serotype O:8 / biotype 1B (strain NCTC 13174 / 8081).